The chain runs to 120 residues: MKLFMVLVASFAFAVALPSKKREETAAENELTGDLQEAAQPMIYAVAFPEIRASCVIGWKQQGATCQRDCECCGVAATCITGDSSTGFCGYHQTPNALGQGILYTADTIKNGFSAIFCAG.

Residues 1 to 16 form the signal peptide; sequence MKLFMVLVASFAFAVA. Cystine bridges form between Cys55-Cys73, Cys66-Cys79, Cys70-Cys118, and Cys72-Cys89.

This sequence belongs to the neurotoxin 03 (Tx2) family. 03 subfamily. As to expression, expressed by the venom gland.

The protein resides in the secreted. Functionally, ion channel inhibitor. The polypeptide is U15-barytoxin-Tl1c (Trittame loki (Brush-footed trapdoor spider)).